The following is a 201-amino-acid chain: Translation initiation factor IF-3 (201 aa).

The tract at residues 167-201 is disordered; that stretch reads PHRGAKTRARARHPGEPAGGPPPKPTAGDSKAAPN. A compositionally biased stretch (basic residues) spans 169–178; it reads RGAKTRARAR.

Belongs to the IF-3 family. As to quaternary structure, monomer.

It localises to the cytoplasm. IF-3 binds to the 30S ribosomal subunit and shifts the equilibrium between 70S ribosomes and their 50S and 30S subunits in favor of the free subunits, thus enhancing the availability of 30S subunits on which protein synthesis initiation begins. This chain is Translation initiation factor IF-3, found in Mycobacterium bovis (strain ATCC BAA-935 / AF2122/97).